A 487-amino-acid polypeptide reads, in one-letter code: 2-aminomuconic semialdehyde dehydrogenase (487 aa).

Residue 209–215 (GTGPRVG) participates in NAD(+) binding. The active-site Proton acceptor is Glu253. The active-site Nucleophile is Cys287. Ser362 bears the Phosphoserine mark.

It belongs to the aldehyde dehydrogenase family. Highly expressed in adult kidney and liver. Detected at lower levels in fetal liver and kidney.

Its subcellular location is the cytoplasm. It catalyses the reaction 2-aminomuconate 6-semialdehyde + NAD(+) + H2O = (2Z,4E)-2-aminomuconate + NADH + 2 H(+). It functions in the pathway amino-acid degradation; L-kynurenine degradation. In terms of biological role, catalyzes the NAD-dependent oxidation of 2-aminomuconic semialdehyde of the kynurenine metabolic pathway in L-tryptophan degradation. In Homo sapiens (Human), this protein is 2-aminomuconic semialdehyde dehydrogenase.